The following is a 69-amino-acid chain: UPF0150 protein AF_1072 (69 aa).

This sequence belongs to the UPF0150 family.

The polypeptide is UPF0150 protein AF_1072 (Archaeoglobus fulgidus (strain ATCC 49558 / DSM 4304 / JCM 9628 / NBRC 100126 / VC-16)).